The primary structure comprises 457 residues: Bifunctional protein GlmU (457 aa).

Residues 1 to 229 are pyrophosphorylase; the sequence is MSNSAKSVVI…LSEMEGVNNR (229 aa). Residues 11–14, K25, Q76, 81–82, 103–105, G140, E154, N169, and N227 contribute to the UDP-N-acetyl-alpha-D-glucosamine site; these read LAAG, GT, and YGD. A Mg(2+)-binding site is contributed by D105. N227 contacts Mg(2+). Residues 230 to 250 form a linker region; sequence LQLSALERIYQSEQAEQLLLA. Positions 251-457 are N-acetyltransferase; that stretch reads GVMLLDPARF…GWKRPVKEKK (207 aa). Positions 333 and 351 each coordinate UDP-N-acetyl-alpha-D-glucosamine. The active-site Proton acceptor is H363. UDP-N-acetyl-alpha-D-glucosamine contacts are provided by Y366 and N377. Acetyl-CoA is bound by residues A380, 386-387, S405, A423, and R440; that span reads NY.

In the N-terminal section; belongs to the N-acetylglucosamine-1-phosphate uridyltransferase family. This sequence in the C-terminal section; belongs to the transferase hexapeptide repeat family. Homotrimer. The cofactor is Mg(2+).

Its subcellular location is the cytoplasm. The enzyme catalyses alpha-D-glucosamine 1-phosphate + acetyl-CoA = N-acetyl-alpha-D-glucosamine 1-phosphate + CoA + H(+). It carries out the reaction N-acetyl-alpha-D-glucosamine 1-phosphate + UTP + H(+) = UDP-N-acetyl-alpha-D-glucosamine + diphosphate. It functions in the pathway nucleotide-sugar biosynthesis; UDP-N-acetyl-alpha-D-glucosamine biosynthesis; N-acetyl-alpha-D-glucosamine 1-phosphate from alpha-D-glucosamine 6-phosphate (route II): step 2/2. The protein operates within nucleotide-sugar biosynthesis; UDP-N-acetyl-alpha-D-glucosamine biosynthesis; UDP-N-acetyl-alpha-D-glucosamine from N-acetyl-alpha-D-glucosamine 1-phosphate: step 1/1. Its pathway is bacterial outer membrane biogenesis; LPS lipid A biosynthesis. In terms of biological role, catalyzes the last two sequential reactions in the de novo biosynthetic pathway for UDP-N-acetylglucosamine (UDP-GlcNAc). The C-terminal domain catalyzes the transfer of acetyl group from acetyl coenzyme A to glucosamine-1-phosphate (GlcN-1-P) to produce N-acetylglucosamine-1-phosphate (GlcNAc-1-P), which is converted into UDP-GlcNAc by the transfer of uridine 5-monophosphate (from uridine 5-triphosphate), a reaction catalyzed by the N-terminal domain. The polypeptide is Bifunctional protein GlmU (Photorhabdus laumondii subsp. laumondii (strain DSM 15139 / CIP 105565 / TT01) (Photorhabdus luminescens subsp. laumondii)).